The chain runs to 353 residues: Photosystem II protein D1 (353 aa).

Position 2 is an N-acetylthreonine (threonine 2). Threonine 2 is subject to Phosphothreonine. A run of 3 helical transmembrane segments spans residues 29–46 (YIGW…TATS), 118–133 (HFLL…EWEL), and 142–156 (WIAV…AATA). Histidine 118 serves as a coordination point for chlorophyll a. Position 126 (tyrosine 126) interacts with pheophytin a. Aspartate 170 and glutamate 189 together coordinate [CaMn4O5] cluster. Residues 197–218 (FHMLGVAGVFGGSLFSAMHGSL) form a helical membrane-spanning segment. Histidine 198 provides a ligand contact to chlorophyll a. Residues histidine 215 and 264-265 (SF) each bind a quinone. Residue histidine 215 coordinates Fe cation. Histidine 272 contacts Fe cation. The chain crosses the membrane as a helical span at residues 274 to 288 (FLAAWPVVGIWFTAL). Histidine 332, glutamate 333, aspartate 342, and alanine 344 together coordinate [CaMn4O5] cluster. A propeptide spanning residues 345-353 (AVEAPSING) is cleaved from the precursor.

The protein belongs to the reaction center PufL/M/PsbA/D family. In terms of assembly, PSII is composed of 1 copy each of membrane proteins PsbA, PsbB, PsbC, PsbD, PsbE, PsbF, PsbH, PsbI, PsbJ, PsbK, PsbL, PsbM, PsbT, PsbX, PsbY, PsbZ, Psb30/Ycf12, at least 3 peripheral proteins of the oxygen-evolving complex and a large number of cofactors. It forms dimeric complexes. The D1/D2 heterodimer binds P680, chlorophylls that are the primary electron donor of PSII, and subsequent electron acceptors. It shares a non-heme iron and each subunit binds pheophytin, quinone, additional chlorophylls, carotenoids and lipids. D1 provides most of the ligands for the Mn4-Ca-O5 cluster of the oxygen-evolving complex (OEC). There is also a Cl(-1) ion associated with D1 and D2, which is required for oxygen evolution. The PSII complex binds additional chlorophylls, carotenoids and specific lipids. serves as cofactor. In terms of processing, tyr-161 forms a radical intermediate that is referred to as redox-active TyrZ, YZ or Y-Z. C-terminally processed by CTPA; processing is essential to allow assembly of the oxygen-evolving complex and thus photosynthetic growth.

It is found in the plastid. It localises to the chloroplast thylakoid membrane. The catalysed reaction is 2 a plastoquinone + 4 hnu + 2 H2O = 2 a plastoquinol + O2. This is one of the two reaction center proteins of photosystem II. Its function is as follows. Photosystem II (PSII) is a light-driven water:plastoquinone oxidoreductase that uses light energy to abstract electrons from H(2)O, generating O(2) and a proton gradient subsequently used for ATP formation. It consists of a core antenna complex that captures photons, and an electron transfer chain that converts photonic excitation into a charge separation. The D1/D2 (PsbA/PsbD) reaction center heterodimer binds P680, the primary electron donor of PSII as well as several subsequent electron acceptors. The sequence is that of Photosystem II protein D1 from Pisum sativum (Garden pea).